Reading from the N-terminus, the 179-residue chain is Ribosome maturation factor RimM (179 aa).

The PRC barrel domain occupies 102-173 (PEEYHYRDLI…ALHVQPPPGL (72 aa)).

Belongs to the RimM family. In terms of assembly, binds ribosomal protein uS19.

It localises to the cytoplasm. In terms of biological role, an accessory protein needed during the final step in the assembly of 30S ribosomal subunit, possibly for assembly of the head region. Essential for efficient processing of 16S rRNA. May be needed both before and after RbfA during the maturation of 16S rRNA. It has affinity for free ribosomal 30S subunits but not for 70S ribosomes. This is Ribosome maturation factor RimM from Synechococcus sp. (strain JA-2-3B'a(2-13)) (Cyanobacteria bacterium Yellowstone B-Prime).